Consider the following 497-residue polypeptide: Serine carboxypeptidase-like 20 (497 aa).

An N-terminal signal peptide occupies residues 1-29; sequence MSIITMVWLMKVFVFVTLLSLVFVITESA. 3 disulfides stabilise this stretch: Cys-90-Cys-386, Cys-254-Cys-266, and Cys-289-Cys-353. Asn-111 and Asn-146 each carry an N-linked (GlcNAc...) asparagine glycan. Ser-186 is a catalytic residue. N-linked (GlcNAc...) asparagine glycosylation occurs at Asn-249. Asn-405 carries an N-linked (GlcNAc...) asparagine glycan. The active site involves Asp-421. The N-linked (GlcNAc...) asparagine glycan is linked to Asn-463. Residue His-474 is part of the active site. Residues 495–497 carry the Microbody targeting signal motif; that stretch reads SKI.

It belongs to the peptidase S10 family. In terms of tissue distribution, ubiquitous.

It localises to the secreted. In terms of biological role, probable carboxypeptidase. The sequence is that of Serine carboxypeptidase-like 20 (SCPL20) from Arabidopsis thaliana (Mouse-ear cress).